The chain runs to 302 residues: Bifunctional protein FolD (302 aa).

NADP(+) contacts are provided by residues 165–167 (GRS), Ser-190, and Ile-231.

The protein belongs to the tetrahydrofolate dehydrogenase/cyclohydrolase family. Homodimer.

The enzyme catalyses (6R)-5,10-methylene-5,6,7,8-tetrahydrofolate + NADP(+) = (6R)-5,10-methenyltetrahydrofolate + NADPH. It carries out the reaction (6R)-5,10-methenyltetrahydrofolate + H2O = (6R)-10-formyltetrahydrofolate + H(+). It functions in the pathway one-carbon metabolism; tetrahydrofolate interconversion. Its function is as follows. Catalyzes the oxidation of 5,10-methylenetetrahydrofolate to 5,10-methenyltetrahydrofolate and then the hydrolysis of 5,10-methenyltetrahydrofolate to 10-formyltetrahydrofolate. The polypeptide is Bifunctional protein FolD (Prochlorococcus marinus (strain MIT 9313)).